A 207-amino-acid polypeptide reads, in one-letter code: Octanoyltransferase (207 aa).

Residues 27–203 enclose the BPL/LPL catalytic domain; sequence ADTEDELWVV…HLETQFTPKA (177 aa). Residues 66 to 73, 133 to 135, and 146 to 148 each bind substrate; these read RGGQITYH, SLG, and GLA. The active-site Acyl-thioester intermediate is C164.

Belongs to the LipB family.

It localises to the cytoplasm. It catalyses the reaction octanoyl-[ACP] + L-lysyl-[protein] = N(6)-octanoyl-L-lysyl-[protein] + holo-[ACP] + H(+). It participates in protein modification; protein lipoylation via endogenous pathway; protein N(6)-(lipoyl)lysine from octanoyl-[acyl-carrier-protein]: step 1/2. Functionally, catalyzes the transfer of endogenously produced octanoic acid from octanoyl-acyl-carrier-protein onto the lipoyl domains of lipoate-dependent enzymes. Lipoyl-ACP can also act as a substrate although octanoyl-ACP is likely to be the physiological substrate. This chain is Octanoyltransferase, found in Neisseria meningitidis serogroup B (strain ATCC BAA-335 / MC58).